A 206-amino-acid polypeptide reads, in one-letter code: Methyltransferase-like 26 (206 aa).

The protein belongs to the UPF0585 family.

This Danio rerio (Zebrafish) protein is Methyltransferase-like 26.